Reading from the N-terminus, the 328-residue chain is L-tyrosine isonitrile synthase (328 aa).

It belongs to the isocyanide synthase family. In terms of assembly, monomer in solution.

It carries out the reaction D-ribulose 5-phosphate + L-tyrosine = (2S)-3-(4-hydroxyphenyl)-2-isocyanopropanoate + hydroxyacetone + formaldehyde + phosphate + H2O + H(+). Its function is as follows. Involved in the biosynthesis of paerucumarin, a cyclized isocyano derivative of tyrosine. Responsible for the synthesis of the isonitrile group on tyrosine using the C2 of ribulose 5-phosphate as the source of the carbon atom. The polypeptide is L-tyrosine isonitrile synthase (Pseudomonas aeruginosa (strain ATCC 15692 / DSM 22644 / CIP 104116 / JCM 14847 / LMG 12228 / 1C / PRS 101 / PAO1)).